A 767-amino-acid polypeptide reads, in one-letter code: Protein SQS1 (767 aa).

Residues 1–17 show a composition bias toward basic residues; that stretch reads MAKRHSHYQGSRRRHAR. Residues 1–60 form a disordered region; that stretch reads MAKRHSHYQGSRRRHARGSNSKKAGRGNAKGIQGRKIKKKPTPTNSWHNSSIPLGEGDLD. The span at 42–52 shows a compositional bias: polar residues; sequence TPTNSWHNSSI. Ser105 bears the Phosphoserine mark. Over residues 176–185 the composition is skewed to acidic residues; sequence EDSENEDDDS. Residues 176–200 are disordered; sequence EDSENEDDDSQNSPSTDHSLSSNES. Phosphoserine is present on residues Ser217, Ser255, Ser334, Ser343, and Ser345. The tract at residues 466–493 is disordered; sequence YSDIPISDSSDEGDSYEGDSYEDDEDMA. Acidic residues predominate over residues 474–492; that stretch reads SSDEGDSYEGDSYEDDEDM. An R3H domain is found at 594–656; it reads GLHIQNIKDE…HTSVVVEKIK (63 aa). One can recognise a G-patch domain in the interval 720–767; that stretch reads NENIGRRMLEKLGWKSGEGLGIQGNKGISEPIFAKIKKNRSGLRHSES.

The protein belongs to the SQS1 family.

It is found in the cytoplasm. It localises to the nucleus. May be involved in splicing since overexpression antagonizes the suppression of splicing defects by SPP382 mutants. The sequence is that of Protein SQS1 (SQS1) from Saccharomyces cerevisiae (strain YJM789) (Baker's yeast).